The sequence spans 352 residues: NAD(+)-dependent homoserine dehydrogenase (352 aa).

It belongs to the homoserine dehydrogenase family.

The catalysed reaction is L-homoserine + NAD(+) = L-aspartate 4-semialdehyde + NADH + H(+). In terms of biological role, dehydrogenase involved in the degradation of canavanine, the delta-oxa-analog of arginine, allowing growth on canavanine as sole nitrogen and carbon source. Catalyzes the conversion of homoserine and NAD(+) to aspartate-semialdehyde and NADH. Is highly specific for NAD(+) and cannot use NADP(+). This chain is NAD(+)-dependent homoserine dehydrogenase, found in Pseudomonas canavaninivorans.